A 366-amino-acid chain; its full sequence is MWPLLLAVALSTLLPLAMPGSAGAVRIKDIATFSGVRDNQLVGYGLVVGLGGTGDKKESVFTVSSMVNMLERMGVAVDPKQLKPKNVASVMVTARMPVSAKPGARLDVTVSSMGDATSLLGGVLLQTPLKGVDGKIYGLAQGSLALGGFSAEGQAARAQKNITTVGLIPGGAIIERGVPFEFNQQDRLTLNLSTADFSTAQQVAERLNAAMGGRYANAVDASTVAMDVPPNYRGNLVPLMASVENIEVAPDAPARVVVDEKTGTVVLGRDVRISRVAVAHGSLQVTVQESQQVSQPAPFSQGQTVVTPQTNVNVREENRRLMMIEGATLQELVDGLNAIGATPRDLISILRAMKAAGALHAELEVI.

The N-terminal stretch at 1–24 (MWPLLLAVALSTLLPLAMPGSAGA) is a signal peptide.

The protein belongs to the FlgI family. As to quaternary structure, the basal body constitutes a major portion of the flagellar organelle and consists of four rings (L,P,S, and M) mounted on a central rod.

The protein localises to the periplasm. Its subcellular location is the bacterial flagellum basal body. In terms of biological role, assembles around the rod to form the L-ring and probably protects the motor/basal body from shearing forces during rotation. This is Flagellar P-ring protein from Nitratidesulfovibrio vulgaris (strain ATCC 29579 / DSM 644 / CCUG 34227 / NCIMB 8303 / VKM B-1760 / Hildenborough) (Desulfovibrio vulgaris).